A 279-amino-acid polypeptide reads, in one-letter code: MISRTLLKRSLPTVQFLRPFTRSSIRRSAHEEDLVNLNELPRQKSLEENYVPLINPTEKYKVQIEELHKFGTYIMACLPKYVQQFSVWKDELTIYVAPSAILPTMLFLKNNTACQFKQVSDVTAADYPSRTNRFDVVYNLLSVRHNSRIRVKTYANETTPVPSITPLFNGANWFERETYDLFGVFFEGHPDLRRILTDYGFEGHPLRKDFPTTGYTEVRYDEEKKRIIYEPLELTQAWRNFTVGSSVWEPVGEGKDFTPESFKLPTPEPEPEKESDEKK.

A mitochondrion-targeting transit peptide spans 1–27 (MISRTLLKRSLPTVQFLRPFTRSSIRR). The segment at 249–279 (EPVGEGKDFTPESFKLPTPEPEPEKESDEKK) is disordered. Residues 270–279 (EPEKESDEKK) show a composition bias toward basic and acidic residues.

This sequence belongs to the complex I 30 kDa subunit family. Core subunit of respiratory chain NADH dehydrogenase (Complex I).

Its subcellular location is the mitochondrion inner membrane. It carries out the reaction a ubiquinone + NADH + 5 H(+)(in) = a ubiquinol + NAD(+) + 4 H(+)(out). Core subunit of the mitochondrial membrane respiratory chain NADH dehydrogenase (Complex I) which catalyzes electron transfer from NADH through the respiratory chain, using ubiquinone as an electron acceptor. Plays a role in cell wall integrity and is involved in osmotic and oxidative resistance, yeast to hypha transition and the ability to damage and invade oral epithelial cells. The chain is NADH dehydrogenase [ubiquinone] iron-sulfur protein 3, mitochondrial (ALI1) from Candida albicans (strain SC5314 / ATCC MYA-2876) (Yeast).